Reading from the N-terminus, the 117-residue chain is Large ribosomal subunit protein bL20c (117 aa).

This sequence belongs to the bacterial ribosomal protein bL20 family.

The protein resides in the plastid. Its subcellular location is the chloroplast. In terms of biological role, binds directly to 23S ribosomal RNA and is necessary for the in vitro assembly process of the 50S ribosomal subunit. It is not involved in the protein synthesizing functions of that subunit. The polypeptide is Large ribosomal subunit protein bL20c (Thalassiosira pseudonana (Marine diatom)).